A 179-amino-acid polypeptide reads, in one-letter code: MSRIGKLPITVPSGVEVTIDGQDVTVKGPKGSLVQRIAEPITVEKDDDGAILVKRPDDERNSRSLHGLSRSLVNNMVVGVSQGYQKDLEIHGVGYRVQQKGSNLEFALGYSHPVVVEPPEGIEFATDGPTKLSVKGIDKQLVGEIAARIRKLRRPDPYKGKGVRYAGENIRRKVGKTGK.

The protein belongs to the universal ribosomal protein uL6 family. In terms of assembly, part of the 50S ribosomal subunit.

This protein binds to the 23S rRNA, and is important in its secondary structure. It is located near the subunit interface in the base of the L7/L12 stalk, and near the tRNA binding site of the peptidyltransferase center. The sequence is that of Large ribosomal subunit protein uL6 from Saccharopolyspora erythraea (strain ATCC 11635 / DSM 40517 / JCM 4748 / NBRC 13426 / NCIMB 8594 / NRRL 2338).